Reading from the N-terminus, the 229-residue chain is Potassium/proton antiporter CemA (229 aa).

3 helical membrane-spanning segments follow: residues 6–26 (AFIPFFYFTSIVFLPWVISLC), 107–127 (ILHFSTNLISFVILSGYSFWG), and 189–209 (ILSGLVSTFPVILDTIFKYWI).

It belongs to the CemA family.

The protein resides in the plastid. Its subcellular location is the chloroplast inner membrane. The enzyme catalyses K(+)(in) + H(+)(out) = K(+)(out) + H(+)(in). Its function is as follows. Contributes to K(+)/H(+) antiport activity by supporting proton efflux to control proton extrusion and homeostasis in chloroplasts in a light-dependent manner to modulate photosynthesis. Prevents excessive induction of non-photochemical quenching (NPQ) under continuous-light conditions. Indirectly promotes efficient inorganic carbon uptake into chloroplasts. The chain is Potassium/proton antiporter CemA from Draba nemorosa (Woodland whitlowgrass).